Reading from the N-terminus, the 602-residue chain is Aspartate--tRNA(Asp/Asn) ligase (602 aa).

Residue Glu170 coordinates L-aspartate. The tract at residues 194-197 is aspartate; the sequence is QLFK. Arg216 is a binding site for L-aspartate. Residues 216-218 and Gln225 each bind ATP; that span reads RDE. His448 lines the L-aspartate pocket. Glu482 is a binding site for ATP. L-aspartate is bound at residue Arg489. 534–537 is a binding site for ATP; that stretch reads GWDR. The disordered stretch occupies residues 559–602; that stretch reads GGVDPLTNAPAPITAQQRKESGVDAKPEPKGDAASAKPDAPADK. A compositionally biased stretch (basic and acidic residues) spans 575-589; that stretch reads QRKESGVDAKPEPKG. Positions 590–602 are enriched in low complexity; sequence DAASAKPDAPADK.

This sequence belongs to the class-II aminoacyl-tRNA synthetase family. Type 1 subfamily. Homodimer.

It localises to the cytoplasm. The catalysed reaction is tRNA(Asx) + L-aspartate + ATP = L-aspartyl-tRNA(Asx) + AMP + diphosphate. Functionally, aspartyl-tRNA synthetase with relaxed tRNA specificity since it is able to aspartylate not only its cognate tRNA(Asp) but also tRNA(Asn). Reaction proceeds in two steps: L-aspartate is first activated by ATP to form Asp-AMP and then transferred to the acceptor end of tRNA(Asp/Asn). This is Aspartate--tRNA(Asp/Asn) ligase from Rhodococcus jostii (strain RHA1).